The primary structure comprises 270 residues: Putative hydro-lyase Reut_A2449 (270 aa).

This sequence belongs to the D-glutamate cyclase family.

This chain is Putative hydro-lyase Reut_A2449, found in Cupriavidus pinatubonensis (strain JMP 134 / LMG 1197) (Cupriavidus necator (strain JMP 134)).